An 88-amino-acid chain; its full sequence is Small ribosomal subunit protein uS17 (88 aa).

This sequence belongs to the universal ribosomal protein uS17 family. As to quaternary structure, part of the 30S ribosomal subunit.

In terms of biological role, one of the primary rRNA binding proteins, it binds specifically to the 5'-end of 16S ribosomal RNA. The chain is Small ribosomal subunit protein uS17 from Pseudomonas savastanoi pv. phaseolicola (strain 1448A / Race 6) (Pseudomonas syringae pv. phaseolicola (strain 1448A / Race 6)).